The primary structure comprises 308 residues: Ribosomal RNA large subunit methyltransferase F (308 aa).

The protein belongs to the methyltransferase superfamily. METTL16/RlmF family.

It is found in the cytoplasm. It carries out the reaction adenosine(1618) in 23S rRNA + S-adenosyl-L-methionine = N(6)-methyladenosine(1618) in 23S rRNA + S-adenosyl-L-homocysteine + H(+). Specifically methylates the adenine in position 1618 of 23S rRNA. The chain is Ribosomal RNA large subunit methyltransferase F from Salmonella schwarzengrund (strain CVM19633).